The following is a 640-amino-acid chain: 1,4-alpha-glucan branching enzyme GlgB (640 aa).

Asp318 (nucleophile) is an active-site residue. Glu371 serves as the catalytic Proton donor.

The protein belongs to the glycosyl hydrolase 13 family. GlgB subfamily. In terms of assembly, monomer.

It catalyses the reaction Transfers a segment of a (1-&gt;4)-alpha-D-glucan chain to a primary hydroxy group in a similar glucan chain.. It participates in glycan biosynthesis; glycogen biosynthesis. Functionally, catalyzes the formation of the alpha-1,6-glucosidic linkages in glycogen by scission of a 1,4-alpha-linked oligosaccharide from growing alpha-1,4-glucan chains and the subsequent attachment of the oligosaccharide to the alpha-1,6 position. This is 1,4-alpha-glucan branching enzyme GlgB from Francisella tularensis subsp. tularensis (strain FSC 198).